Reading from the N-terminus, the 404-residue chain is MIVRHLSLGDFRNYTRADVALLPGATLFVGSNGQGKTNLVEALGFLSTLGSHRVSTDQALIRQGAESAVIRALLQHAGRELRVEVQINRSAANRAQVNSTPTKPRELPRYFSSVLFAPEDLALVRGDPSGRRRLLDQLLVLRTPRLAGVLSDYDRALKQRNTLLKSARARGMKADQLGTLDIWDERLVAIGSQIIAARGALVEALQPELARAYLAVAGSDHGPSARPELSILADDPGEDDIADETGARDGGRFTRSDDVVPVFTAAIARMRPRELERGLTLVGPHRDDVLFRLNGLPAKGYASHGESWSFALALKLASAELLRRDSQTGDPVLILDDVFAELDQARRGRLAEAVTGFEQVLITAAVFEDVPAHLAANAVHIRAGEIVDAPAPASEPDAEGGGAA.

Residue 30–37 (GSNGQGKT) participates in ATP binding.

It belongs to the RecF family.

Its subcellular location is the cytoplasm. The RecF protein is involved in DNA metabolism; it is required for DNA replication and normal SOS inducibility. RecF binds preferentially to single-stranded, linear DNA. It also seems to bind ATP. This Clavibacter michiganensis subsp. michiganensis (strain NCPPB 382) protein is DNA replication and repair protein RecF.